The chain runs to 190 residues: Photosynthetic NDH subunit of lumenal location 2, chloroplastic (190 aa).

A chloroplast-targeting transit peptide spans 1 to 31 (MSSFTTTNTPPPYLLRKIYHRRVNQPFSVVC). The transit peptide at 32 to 68 (CTGEPQQDIFTRRRTLTSLITFTVIGGATSSALAQEK) directs the protein to the thylakoid. Coiled-coil stretches lie at residues 87–107 (EDAA…REML) and 139–159 (ESRR…MSEL).

Belongs to the PsbQ family. As to quaternary structure, part of the chloroplast NDH complex, composed of a mixture of chloroplast and nucleus encoded subunits. Component of the NDH lumenal subcomplex, at least composed of PnsL1, PnsL2, PnsL3, PnsL4 and PnsL5.

It is found in the plastid. It localises to the chloroplast thylakoid membrane. NDH shuttles electrons from NAD(P)H:plastoquinone, via FMN and iron-sulfur (Fe-S) centers, to quinones in the photosynthetic chain and possibly in a chloroplast respiratory chain. The immediate electron acceptor for the enzyme in this species is believed to be plastoquinone. Couples the redox reaction to proton translocation, and thus conserves the redox energy in a proton gradient. Required for both formation and activity of the chloroplast NAD(P)H dehydrogenase (NDH) complex. This chain is Photosynthetic NDH subunit of lumenal location 2, chloroplastic, found in Arabidopsis thaliana (Mouse-ear cress).